We begin with the raw amino-acid sequence, 327 residues long: Phenylalanine--tRNA ligase alpha subunit (327 aa).

Glutamate 252 is a Mg(2+) binding site.

Belongs to the class-II aminoacyl-tRNA synthetase family. Phe-tRNA synthetase alpha subunit type 1 subfamily. In terms of assembly, tetramer of two alpha and two beta subunits. It depends on Mg(2+) as a cofactor.

The protein localises to the cytoplasm. It carries out the reaction tRNA(Phe) + L-phenylalanine + ATP = L-phenylalanyl-tRNA(Phe) + AMP + diphosphate + H(+). This is Phenylalanine--tRNA ligase alpha subunit from Erwinia tasmaniensis (strain DSM 17950 / CFBP 7177 / CIP 109463 / NCPPB 4357 / Et1/99).